The sequence spans 100 residues: NADH-quinone oxidoreductase subunit K (100 aa).

The next 3 membrane-spanning stretches (helical) occupy residues 1 to 21, 28 to 48, and 64 to 84; these read MIGL…GLAG, ILLL…GFVA, and FIIA…ILWF.

This sequence belongs to the complex I subunit 4L family. NDH-1 is composed of 14 different subunits. Subunits NuoA, H, J, K, L, M, N constitute the membrane sector of the complex.

Its subcellular location is the cell inner membrane. It catalyses the reaction a quinone + NADH + 5 H(+)(in) = a quinol + NAD(+) + 4 H(+)(out). In terms of biological role, NDH-1 shuttles electrons from NADH, via FMN and iron-sulfur (Fe-S) centers, to quinones in the respiratory chain. The immediate electron acceptor for the enzyme in this species is believed to be ubiquinone. Couples the redox reaction to proton translocation (for every two electrons transferred, four hydrogen ions are translocated across the cytoplasmic membrane), and thus conserves the redox energy in a proton gradient. This is NADH-quinone oxidoreductase subunit K from Helicobacter pylori (strain P12).